Reading from the N-terminus, the 400-residue chain is Elongation factor Tu 1 (400 aa).

A tr-type G domain is found at 10–209 (KPHLNIGTIG…AVDSYIPLPQ (200 aa)). The interval 19–26 (GHIDHGKT) is G1. Residue 19–26 (GHIDHGKT) coordinates GTP. Thr26 is a binding site for Mg(2+). Residues 60 to 64 (GITIN) form a G2 region. Residues 81 to 84 (DCPG) are G3. GTP is bound by residues 81-85 (DCPGH) and 136-139 (NKTD). Residues 136–139 (NKTD) form a G4 region. A G5 region spans residues 174–176 (SAL).

The protein belongs to the TRAFAC class translation factor GTPase superfamily. Classic translation factor GTPase family. EF-Tu/EF-1A subfamily. Monomer.

The protein resides in the cytoplasm. It carries out the reaction GTP + H2O = GDP + phosphate + H(+). Functionally, GTP hydrolase that promotes the GTP-dependent binding of aminoacyl-tRNA to the A-site of ribosomes during protein biosynthesis. The sequence is that of Elongation factor Tu 1 from Syntrophomonas wolfei subsp. wolfei (strain DSM 2245B / Goettingen).